Reading from the N-terminus, the 152-residue chain is uncharacterized protein (152 aa).

Topologically, residues 1 to 5 (MWFPQ) are cytoplasmic. Residues 6–26 (IIAGMAAGGAASAMTPGKVLF) traverse the membrane as a helical segment. Residues 27–38 (TNALGLGCSRSR) lie on the Extracellular side of the membrane. A helical transmembrane segment spans residues 39-59 (GLFLEMFGTAVLCLTVLMTAV). Topologically, residues 60-65 (EKRETN) are cytoplasmic. Residues 66 to 86 (FMAALPIGISLFMAHMALTGY) form a helical membrane-spanning segment. Over 87–110 (TGTGVNPARSLGAAVAARYFPHYH) the chain is Extracellular. The NPA motif lies at 92-94 (NPA). A helical transmembrane segment spans residues 111–131 (WIYWISPLLGAFLAWSVWQLL). Over 132–152 (QILDYTTYVNAEKAAGQKKED) the chain is Cytoplasmic.

The protein belongs to the MIP/aquaporin (TC 1.A.8) family.

Its subcellular location is the membrane. This is an uncharacterized protein from Saccharomyces cerevisiae (strain RM11-1a) (Baker's yeast).